The sequence spans 517 residues: Bifunctional purine biosynthesis protein PurH (517 aa).

Residues 1-145 (MSPLALVSVS…KNHKDVSVLV (145 aa)) form the MGS-like domain.

The protein belongs to the PurH family.

The catalysed reaction is (6R)-10-formyltetrahydrofolate + 5-amino-1-(5-phospho-beta-D-ribosyl)imidazole-4-carboxamide = 5-formamido-1-(5-phospho-D-ribosyl)imidazole-4-carboxamide + (6S)-5,6,7,8-tetrahydrofolate. The enzyme catalyses IMP + H2O = 5-formamido-1-(5-phospho-D-ribosyl)imidazole-4-carboxamide. Its pathway is purine metabolism; IMP biosynthesis via de novo pathway; 5-formamido-1-(5-phospho-D-ribosyl)imidazole-4-carboxamide from 5-amino-1-(5-phospho-D-ribosyl)imidazole-4-carboxamide (10-formyl THF route): step 1/1. It functions in the pathway purine metabolism; IMP biosynthesis via de novo pathway; IMP from 5-formamido-1-(5-phospho-D-ribosyl)imidazole-4-carboxamide: step 1/1. The polypeptide is Bifunctional purine biosynthesis protein PurH (Prochlorococcus marinus (strain AS9601)).